Here is a 432-residue protein sequence, read N- to C-terminus: Trigger factor (432 aa).

Residues 163-248 (GDVVVLDFAA…VHAVKERRLP (86 aa)) form the PPIase FKBP-type domain.

This sequence belongs to the FKBP-type PPIase family. Tig subfamily.

The protein localises to the cytoplasm. It carries out the reaction [protein]-peptidylproline (omega=180) = [protein]-peptidylproline (omega=0). In terms of biological role, involved in protein export. Acts as a chaperone by maintaining the newly synthesized protein in an open conformation. Functions as a peptidyl-prolyl cis-trans isomerase. The chain is Trigger factor from Nitratidesulfovibrio vulgaris (strain DSM 19637 / Miyazaki F) (Desulfovibrio vulgaris).